We begin with the raw amino-acid sequence, 238 residues long: Sugar fermentation stimulation protein homolog (238 aa).

It belongs to the SfsA family.

The protein is Sugar fermentation stimulation protein homolog of Pseudoalteromonas translucida (strain TAC 125).